We begin with the raw amino-acid sequence, 414 residues long: Enterobactin exporter EntS (414 aa).

At 1–21 the chain is on the cytoplasmic side; it reads MNRQSWLLNLSLLKTHPAFRA. A helical membrane pass occupies residues 22 to 42; that stretch reads VFLARFISIVSLGLLGVAVPV. At 43 to 55 the chain is on the periplasmic side; that stretch reads QIQMMTHSTWQVG. The helical transmembrane segment at 56 to 76 threads the bilayer; that stretch reads LSVTLTGGAMFIGLMVGGVLA. Topologically, residues 77 to 83 are cytoplasmic; that stretch reads DRYERKK. The chain crosses the membrane as a helical span at residues 84–104; that stretch reads VILLARGTCGIGFIGLCVNAL. Residues 105-109 lie on the Periplasmic side of the membrane; it reads LPEPS. Residues 110–130 form a helical membrane-spanning segment; sequence LLAIYLLGLWDGFFASLGVTA. The Cytoplasmic segment spans residues 131 to 156; the sequence is LLAATPALVGRENLMQAGAITMLTVR. A helical membrane pass occupies residues 157 to 177; the sequence is LGSVISPMLGGILLASGGVAW. A topological domain (periplasmic) is located at residue Asn-178. Residues 179-199 traverse the membrane as a helical segment; that stretch reads YGLAAAGTFITLLPLLTLPRL. Over 200–218 the chain is Cytoplasmic; that stretch reads PVPPQPRENPFIALLAAFR. A helical membrane pass occupies residues 219-239; it reads FLLASPLIGGIALLGGLVTMA. Residues 240 to 256 are Periplasmic-facing; that stretch reads SAVRVLYPALAMSWQMS. The chain crosses the membrane as a helical span at residues 257–277; the sequence is AAQIGLLYAAIPLGAAIGALT. Over 278 to 287 the chain is Cytoplasmic; it reads SGQLAHSVRP. Residues 288-307 traverse the membrane as a helical segment; it reads GLIMLVSTVGSFLAVGLFAI. The Periplasmic segment spans residues 308-313; that stretch reads MPIWIA. The chain crosses the membrane as a helical span at residues 314 to 336; sequence GVICLALFGWLSAISSLLQYTLL. Residues 337 to 356 are Cytoplasmic-facing; that stretch reads QTQTPENMLGRMNGLWTAQN. The chain crosses the membrane as a helical span at residues 357–377; that stretch reads VTGDAIGAALLGGLGAMMTPV. Position 378 (Ala-378) is a topological domain, periplasmic. The helical transmembrane segment at 379–399 threads the bilayer; the sequence is SASVSGFGLVIIGLLLLLVLG. Topologically, residues 400–414 are cytoplasmic; it reads ELRRFRQTPPVSDAG.

This sequence belongs to the major facilitator superfamily. EntS (TC 2.A.1.38) family.

The protein localises to the cell inner membrane. In terms of biological role, component of an export pathway for enterobactin. This is Enterobactin exporter EntS from Salmonella typhi.